We begin with the raw amino-acid sequence, 447 residues long: MQVTETVNESLKREYKIVIPAADIAERSARRLEELKGQMRLPGFRPGKVPMSMLRQRFGKSVLGEVLEKAVQESIREVMTSHELKPATQPDIDLISEVEEGKDVEFTLALEVLPEIGETDFSALALEREVAEVAAEKIEEALETLRQQSKTHEPVTDGRAAAGGDLVVIDFIGKLDGEAFEGGSAEAYDLELGSNSFIPGFEDQLIGATAGEARTVTVSFPEDYPAAHLAGKETVFDVTVKEVKQAVVPELDDDLAKAFGKESAEALREAVKADLQGELDEVSKTKLKRKLLDALADGHDFPVPQTLVDAEFEGIWAQIEKAKTDGQLDEEDAAKSDEDLRADYRKIAERRVRLGLLLADVGQRAQVTVAQEDLNKALMRELRRFPGQEAAVINYYRNNQQAMDNLRAPVFEDKVCAHILALATVTDKPVSVEDLMKDPDEDATPTA.

In terms of domain architecture, PPIase FKBP-type spans 164 to 249 (GDLVVIDFIG…VKEVKQAVVP (86 aa)).

It belongs to the FKBP-type PPIase family. Tig subfamily.

The protein resides in the cytoplasm. The catalysed reaction is [protein]-peptidylproline (omega=180) = [protein]-peptidylproline (omega=0). Functionally, involved in protein export. Acts as a chaperone by maintaining the newly synthesized protein in an open conformation. Functions as a peptidyl-prolyl cis-trans isomerase. The sequence is that of Trigger factor from Rhodospirillum rubrum (strain ATCC 11170 / ATH 1.1.1 / DSM 467 / LMG 4362 / NCIMB 8255 / S1).